A 249-amino-acid polypeptide reads, in one-letter code: Seipin homolog (249 aa).

Residues 1-10 lie on the Cytoplasmic side of the membrane; it reads MGYLVKLFKL. The chain crosses the membrane as a helical span at residues 11–31; that stretch reads VVWMLVIGLFSIPSLVSYVIF. Topologically, residues 32 to 212 are lumenal; that stretch reads YDTVIPHSVI…GMRWFMYTHK (181 aa). Residues 213–233 form a helical membrane-spanning segment; it reads VSAFLVFTSLFWFTGITSTII. Residues 234–249 lie on the Cytoplasmic side of the membrane; the sequence is TYLIVSSTSETKATRR.

The protein belongs to the seipin family.

It localises to the endoplasmic reticulum membrane. Functionally, involved in lipid metabolism and lipid droplet (LD) morphology, number, and size. Facilitates initiation of LD formation, and ensures that vectorial budding of LDs from the ER is directed towards the cytoplasm. This Schizosaccharomyces pombe (strain 972 / ATCC 24843) (Fission yeast) protein is Seipin homolog.